Reading from the N-terminus, the 402-residue chain is Digeranylgeranylglycerophospholipid reductase (402 aa).

10 residues coordinate FAD: glycine 15, glutamate 34, cysteine 45, alanine 46, glycine 48, arginine 99, alanine 123, aspartate 280, glycine 292, and isoleucine 293.

It belongs to the geranylgeranyl reductase family. DGGGPL reductase subfamily. Requires FAD as cofactor.

The enzyme catalyses a 2,3-bis-O-phytanyl-sn-glycerol 1-phospholipid + 8 oxidized 2[4Fe-4S]-[ferredoxin] = a 2,3-bis-O-(geranylgeranyl)-sn-glycerol 1-phospholipid + 8 reduced 2[4Fe-4S]-[ferredoxin] + 16 H(+). The catalysed reaction is 2,3-bis-O-(phytanyl)-sn-glycerol 1-phosphate + 8 oxidized 2[4Fe-4S]-[ferredoxin] = 2,3-bis-O-(geranylgeranyl)-sn-glycerol 1-phosphate + 8 reduced 2[4Fe-4S]-[ferredoxin] + 16 H(+). It catalyses the reaction a 2,3-bis-O-phytanyl-sn-glycerol 1-phospholipid + 8 A = a 2,3-bis-O-(geranylgeranyl)-sn-glycerol 1-phospholipid + 8 AH2. It carries out the reaction CDP-2,3-bis-O-(geranylgeranyl)-sn-glycerol + 8 AH2 = CDP-2,3-bis-O-(phytanyl)-sn-glycerol + 8 A. The enzyme catalyses archaetidylserine + 8 AH2 = 2,3-bis-O-phytanyl-sn-glycero-3-phospho-L-serine + 8 A. It participates in membrane lipid metabolism; glycerophospholipid metabolism. Is involved in the reduction of 2,3-digeranylgeranylglycerophospholipids (unsaturated archaeols) into 2,3-diphytanylglycerophospholipids (saturated archaeols) in the biosynthesis of archaeal membrane lipids. Catalyzes the formation of archaetidic acid (2,3-di-O-phytanyl-sn-glyceryl phosphate) from 2,3-di-O-geranylgeranylglyceryl phosphate (DGGGP) via the hydrogenation of each double bond of the isoprenoid chains. Is also probably able to reduce double bonds of geranyl groups in CDP-2,3-bis-O-(geranylgeranyl)-sn-glycerol and archaetidylserine, thus acting at various stages in the biosynthesis of archaeal membrane lipids. This Methanospirillum hungatei JF-1 (strain ATCC 27890 / DSM 864 / NBRC 100397 / JF-1) protein is Digeranylgeranylglycerophospholipid reductase.